Here is a 911-residue protein sequence, read N- to C-terminus: Valine--tRNA ligase (911 aa).

The 'HIGH' region signature appears at 57–67 (PTVSGSLHVGH). A 'KMSKS' region motif is present at residues 599–603 (KMSKS). ATP is bound at residue Lys-602. The segment at 882–911 (EESAAEGTPETEVAVEASELGEPPAKKPKH) is disordered.

This sequence belongs to the class-I aminoacyl-tRNA synthetase family. ValS type 2 subfamily. Monomer.

The protein resides in the cytoplasm. The catalysed reaction is tRNA(Val) + L-valine + ATP = L-valyl-tRNA(Val) + AMP + diphosphate. In terms of biological role, catalyzes the attachment of valine to tRNA(Val). As ValRS can inadvertently accommodate and process structurally similar amino acids such as threonine, to avoid such errors, it has a 'posttransfer' editing activity that hydrolyzes mischarged Thr-tRNA(Val) in a tRNA-dependent manner. The chain is Valine--tRNA ligase from Bifidobacterium longum (strain NCC 2705).